The primary structure comprises 610 residues: Glutamine--fructose-6-phosphate aminotransferase [isomerizing] (610 aa).

The active-site Nucleophile; for GATase activity is the C2. One can recognise a Glutamine amidotransferase type-2 domain in the interval 2 to 218 (CGIVGAVAQR…EGDVAEITRH (217 aa)). 2 SIS domains span residues 286–426 (AADI…LKGR) and 459–600 (LSED…VDQP). K605 (for Fru-6P isomerization activity) is an active-site residue.

Homodimer.

The protein resides in the cytoplasm. The enzyme catalyses D-fructose 6-phosphate + L-glutamine = D-glucosamine 6-phosphate + L-glutamate. Functionally, catalyzes the first step in hexosamine metabolism, converting fructose-6P into glucosamine-6P using glutamine as a nitrogen source. In Haemophilus ducreyi (strain 35000HP / ATCC 700724), this protein is Glutamine--fructose-6-phosphate aminotransferase [isomerizing].